Consider the following 142-residue polypeptide: Large ribosomal subunit protein uL13 (142 aa).

This sequence belongs to the universal ribosomal protein uL13 family. In terms of assembly, part of the 50S ribosomal subunit.

Its function is as follows. This protein is one of the early assembly proteins of the 50S ribosomal subunit, although it is not seen to bind rRNA by itself. It is important during the early stages of 50S assembly. The sequence is that of Large ribosomal subunit protein uL13 from Polaromonas sp. (strain JS666 / ATCC BAA-500).